The following is a 190-amino-acid chain: Probable RNA-binding protein 18 (190 aa).

The RRM domain maps to 25-106 (HRLWIGNVDP…KKLVVRWAHA (82 aa)).

This Xenopus laevis (African clawed frog) protein is Probable RNA-binding protein 18 (rbm18).